Reading from the N-terminus, the 188-residue chain is MATVGMNDVKNGMKILVNNEPAVITETEYVKPGKGQAFTRMKYRFIKSGRVVEMTMKATDDVEVADVVDTDMRYLYTDGEYWHFMDPESFEQVQADKAGMGGAEKWLKGEEDCIVTLWNGAPIWVQPPNFVELKITETDPGVRGDTSGGGGKPATLETGAVVRVPLFVNQDEVIKVDTRSGEYSARVK.

Lys-34 carries the N6-(3,6-diaminohexanoyl)-5-hydroxylysine modification.

The protein belongs to the elongation factor P family. May be beta-lysylated on the epsilon-amino group of Lys-34 by the combined action of EpmA and EpmB, and then hydroxylated on the C5 position of the same residue by EpmC (if this protein is present). Lysylation is critical for the stimulatory effect of EF-P on peptide-bond formation. The lysylation moiety may extend toward the peptidyltransferase center and stabilize the terminal 3-CCA end of the tRNA. Hydroxylation of the C5 position on Lys-34 may allow additional potential stabilizing hydrogen-bond interactions with the P-tRNA.

Its subcellular location is the cytoplasm. It functions in the pathway protein biosynthesis; polypeptide chain elongation. Its function is as follows. Involved in peptide bond synthesis. Alleviates ribosome stalling that occurs when 3 or more consecutive Pro residues or the sequence PPG is present in a protein, possibly by augmenting the peptidyl transferase activity of the ribosome. Modification of Lys-34 is required for alleviation. The sequence is that of Elongation factor P from Xanthomonas campestris pv. campestris (strain B100).